The chain runs to 110 residues: Prothymosin alpha (110 aa).

Met1 is modified (N-acetylmethionine). The interval 1–110 (MSDAAVDTSS…TKKQKTDEDD (110 aa)) is disordered. An N-acetylserine; in Prothymosin alpha, N-terminally processed modification is found at Ser2. Ser2 carries the phosphoserine modification. The residue at position 8 (Thr8) is a Phosphothreonine; by CK2. A phosphoserine mark is found at Ser9 and Ser10. Residues Thr13 and Thr14 each carry the phosphothreonine; by CK2 modification. Basic and acidic residues predominate over residues 13-31 (TTKDLKEKKEVVEEAENGR). Lys15 bears the N6-acetyllysine; alternate mark. The residue at position 15 (Lys15) is an N6-succinyllysine; alternate. The segment covering 32–41 (EAPANGNANE) has biased composition (low complexity). Over residues 42–83 (ENGEQEADNEVDEEEEEGGEEEEEEEEGDGEEEDGDEDEEAE) the composition is skewed to acidic residues. The span at 100–110 (DTKKQKTDEDD) shows a compositional bias: basic and acidic residues. Residue Thr101 is modified to Phosphothreonine. An N6-acetyllysine; alternate modification is found at Lys102. A Glycyl lysine isopeptide (Lys-Gly) (interchain with G-Cter in SUMO2); alternate cross-link involves residue Lys102. Thr106 carries the phosphothreonine modification.

This sequence belongs to the pro/parathymosin family. In terms of assembly, interacts with NUPR1; regulates apoptotic process. In terms of processing, covalently linked to a small RNA of about 20 nucleotides.

It is found in the nucleus. In terms of biological role, prothymosin alpha may mediate immune function by conferring resistance to certain opportunistic infections. The protein is Prothymosin alpha (PTMA) of Bos taurus (Bovine).